Reading from the N-terminus, the 244-residue chain is Phosphoadenosine 5'-phosphosulfate reductase (244 aa).

Cys239 (nucleophile; cysteine thiosulfonate intermediate) is an active-site residue.

It belongs to the PAPS reductase family. CysH subfamily.

The protein localises to the cytoplasm. The catalysed reaction is [thioredoxin]-disulfide + sulfite + adenosine 3',5'-bisphosphate + 2 H(+) = [thioredoxin]-dithiol + 3'-phosphoadenylyl sulfate. The protein operates within sulfur metabolism; hydrogen sulfide biosynthesis; sulfite from sulfate: step 3/3. In terms of biological role, catalyzes the formation of sulfite from phosphoadenosine 5'-phosphosulfate (PAPS) using thioredoxin as an electron donor. This chain is Phosphoadenosine 5'-phosphosulfate reductase, found in Buchnera aphidicola subsp. Acyrthosiphon pisum (strain 5A).